The sequence spans 41 residues: Photosystem II reaction center protein J (41 aa).

A helical transmembrane segment spans residues I9–F29.

It belongs to the PsbJ family. In terms of assembly, PSII is composed of 1 copy each of membrane proteins PsbA, PsbB, PsbC, PsbD, PsbE, PsbF, PsbH, PsbI, PsbJ, PsbK, PsbL, PsbM, PsbT, PsbX, PsbY, PsbZ, Psb30/Ycf12, at least 3 peripheral proteins of the oxygen-evolving complex and a large number of cofactors. It forms dimeric complexes.

The protein resides in the plastid. The protein localises to the chloroplast thylakoid membrane. Functionally, one of the components of the core complex of photosystem II (PSII). PSII is a light-driven water:plastoquinone oxidoreductase that uses light energy to abstract electrons from H(2)O, generating O(2) and a proton gradient subsequently used for ATP formation. It consists of a core antenna complex that captures photons, and an electron transfer chain that converts photonic excitation into a charge separation. The protein is Photosystem II reaction center protein J of Ostreococcus tauri.